A 446-amino-acid chain; its full sequence is MGLDTLSNSLKDAMKKLAGKTVIDRAAVDELVRDLQRALLSSDVNVKLVMELSKQIKARSLDEDLPKGINAREHVLRIVYQELVNLVGKEAEFSLKPQKILMAGLQGSGKTTTTGKLCRYFQRKGLKVGAIGADNFRPGAYAQLETLCKKINVPSYGDPKEKDAVKIVKDGLAALKDVDVIIVDTAGRHALEDDLIDEITQVNAYLNPDHRWLVIDAALGQAARDQAKRFHEAIGIDGVIVTKMDGTAKGGGAMSAVAETQSGIVFIGNGETIDDLERFDPNGFISRLLGMGDLKALVEKAEESMNAEDVDVNAMLRGKFTLNDMYKQLEAVQKMGPLKQVLSMLPMGNMNVPSDALEGTADKMKKFRIIMDSMTPQELDEPALINTSRMIRVAKGSGSSVEEVRDLIKYYKMMQKTLKGFRGNRMAMGKMMKQMQKGGMGPMGPM.

Residues 104-111 (GLQGSGKT), 184-188 (DTAGR), and 242-245 (TKMD) contribute to the GTP site.

This sequence belongs to the GTP-binding SRP family. SRP54 subfamily. In terms of assembly, part of the signal recognition particle protein translocation system, which is composed of SRP and FtsY. Archaeal SRP consists of a 7S RNA molecule of 300 nucleotides and two protein subunits: SRP54 and SRP19.

Its subcellular location is the cytoplasm. It catalyses the reaction GTP + H2O = GDP + phosphate + H(+). In terms of biological role, involved in targeting and insertion of nascent membrane proteins into the cytoplasmic membrane. Binds to the hydrophobic signal sequence of the ribosome-nascent chain (RNC) as it emerges from the ribosomes. The SRP-RNC complex is then targeted to the cytoplasmic membrane where it interacts with the SRP receptor FtsY. In Methanocorpusculum labreanum (strain ATCC 43576 / DSM 4855 / Z), this protein is Signal recognition particle 54 kDa protein.